The following is a 219-amino-acid chain: 7-cyano-7-deazaguanine synthase (219 aa).

10-20 (FSGGQDSTTCL) is an ATP binding site. Zn(2+)-binding residues include Cys-188, Cys-197, Cys-200, and Cys-203.

This sequence belongs to the QueC family. As to quaternary structure, homodimer. The cofactor is Zn(2+).

It catalyses the reaction 7-carboxy-7-deazaguanine + NH4(+) + ATP = 7-cyano-7-deazaguanine + ADP + phosphate + H2O + H(+). Its pathway is purine metabolism; 7-cyano-7-deazaguanine biosynthesis. Catalyzes the ATP-dependent conversion of 7-carboxy-7-deazaguanine (CDG) to 7-cyano-7-deazaguanine (preQ(0)). This is 7-cyano-7-deazaguanine synthase from Clostridium botulinum (strain ATCC 19397 / Type A).